The primary structure comprises 137 residues: Small ribosomal subunit protein uS11 (137 aa).

Residues 1–10 (MPPKSRSTGP) are compositionally biased toward polar residues. Disordered regions lie at residues 1 to 27 (MPPK…IPHG) and 116 to 137 (GTIS…RRRV). The segment covering 12–21 (KTQKTRRRDK) has biased composition (basic residues).

The protein belongs to the universal ribosomal protein uS11 family. Part of the 30S ribosomal subunit. Interacts with proteins S7 and S18. Binds to IF-3.

In terms of biological role, located on the platform of the 30S subunit, it bridges several disparate RNA helices of the 16S rRNA. Forms part of the Shine-Dalgarno cleft in the 70S ribosome. In Rhodococcus erythropolis (strain PR4 / NBRC 100887), this protein is Small ribosomal subunit protein uS11.